Consider the following 430-residue polypeptide: Peptidoglycan DD-endopeptidase ShyA (430 aa).

A signal peptide spans 1–35 (MISKSIILRFSELSMRKKATLVGLPLLAVAAISSS). His297, Asp301, and His378 together coordinate Zn(2+).

This sequence belongs to the peptidase M23B family. Zn(2+) is required as a cofactor.

Its subcellular location is the periplasm. The protein operates within cell wall degradation; peptidoglycan degradation. Its activity is regulated as follows. Reduced activity in 0.5 mM EDTA and a complete loss of activity at higher EDTA concentrations. The effect of EDTA can be reversed by addition of 1 mM ZnCl(2). Conformational switching between open (catalytically active) and closed (catalytically inactive) conformation of this protein is suggested mechanism of its regulation. The signal or inducer of the conformational shift to the open form unmasking the active site is currently not understood. In terms of biological role, cell wall peptidoglycan (PG) DD-endopeptidase essential for cell growth and elongation. Hydrolyzes peptide cross-links which covalently connect adjacent PG strands probably to allow insertion of new glycans and thus cell wall expansion. Degrades purified whole PG sacculi in vitro. Releases predominantly short glycan chains from the PG. Cleaves D,D cross-linked muropeptides specifically preferring dimeric tetrapeptide-tetrapeptide (D44) substrates and has only little activity on dimeric tetrapeptide-pentapeptide (D45) substrates. Also converts more than 50% of tetrapeptide-tripeptide (D43) to product as well as more than 50% of D43M, which contains D-Met instead of D-Ala in the fourth position of the acceptor moiety. Cleaves the D,D bond between diaminopimelic acid (DAP) and D-Ala of the PG substrate in vitro. No cleavage of L,D bond connecting two DAP moieties. This is Peptidoglycan DD-endopeptidase ShyA from Vibrio cholerae serotype O1 (strain ATCC 39315 / El Tor Inaba N16961).